A 448-amino-acid chain; its full sequence is Putative RNA-ligase (448 aa).

The protein belongs to the asfivirus M448R family.

It is found in the virion. The protein is Putative RNA-ligase of Ornithodoros (relapsing fever ticks).